Here is a 398-residue protein sequence, read N- to C-terminus: Protochlorophyllide reductase, chloroplastic (398 aa).

This sequence belongs to the short-chain dehydrogenases/reductases (SDR) family. POR subfamily.

Its subcellular location is the plastid. The protein localises to the chloroplast. It catalyses the reaction chlorophyllide a + NADP(+) = protochlorophyllide a + NADPH + H(+). Its pathway is porphyrin-containing compound metabolism; chlorophyll biosynthesis. Its function is as follows. Phototransformation of protochlorophyllide (Pchlide) to chlorophyllide (Chlide). The sequence is that of Protochlorophyllide reductase, chloroplastic (POR1) from Daucus carota (Wild carrot).